We begin with the raw amino-acid sequence, 259 residues long: Oxaloacetate tautomerase FMP41, mitochondrial (259 aa).

Mg(2+) contacts are provided by E87, E89, and D121.

It belongs to the FAH family. Requires Mg(2+) as cofactor. Mn(2+) serves as cofactor.

It is found in the mitochondrion. The enzyme catalyses oxaloacetate = enol-oxaloacetate. In terms of biological role, tautomerase that converts enol-oxaloacetate, a strong inhibitor of succinate dehydrogenase, to the physiological keto form of oxaloacetate. The protein is Oxaloacetate tautomerase FMP41, mitochondrial of Saccharomyces cerevisiae (strain ATCC 204508 / S288c) (Baker's yeast).